The following is a 293-amino-acid chain: 4-diphosphocytidyl-2-C-methyl-D-erythritol kinase (293 aa).

K11 is an active-site residue. An ATP-binding site is contributed by 96-106 (PVAAGLGGGSS). The active site involves D138.

The protein belongs to the GHMP kinase family. IspE subfamily.

It catalyses the reaction 4-CDP-2-C-methyl-D-erythritol + ATP = 4-CDP-2-C-methyl-D-erythritol 2-phosphate + ADP + H(+). Its pathway is isoprenoid biosynthesis; isopentenyl diphosphate biosynthesis via DXP pathway; isopentenyl diphosphate from 1-deoxy-D-xylulose 5-phosphate: step 3/6. Catalyzes the phosphorylation of the position 2 hydroxy group of 4-diphosphocytidyl-2C-methyl-D-erythritol. This is 4-diphosphocytidyl-2-C-methyl-D-erythritol kinase from Xanthobacter autotrophicus (strain ATCC BAA-1158 / Py2).